Reading from the N-terminus, the 509-residue chain is Glucose-1-phosphate adenylyltransferase large subunit 4, chloroplastic/amyloplastic (509 aa).

Residues 1 to 36 (MATCSWAATTAAAAPPRPPARCRSRVAALRRTAAAS) constitute a chloroplast transit peptide.

The protein belongs to the bacterial/plant glucose-1-phosphate adenylyltransferase family. Heterotetramer composed of two small and two large subunits. Expressed in leaves and stems.

Its subcellular location is the plastid. The protein localises to the chloroplast. It carries out the reaction alpha-D-glucose 1-phosphate + ATP + H(+) = ADP-alpha-D-glucose + diphosphate. The protein operates within glycan biosynthesis; starch biosynthesis. Its activity is regulated as follows. Activated by 3'phosphoglycerate, inhibited by orthophosphate. Allosteric regulation. Involved in synthesis of starch. Catalyzes the synthesis of ADP-glucose, a molecule that serves as an activated glycosyl donor for alpha-1,4-glucan synthesis. Essential for starch synthesis in leaf chloroplasts. The polypeptide is Glucose-1-phosphate adenylyltransferase large subunit 4, chloroplastic/amyloplastic (Oryza sativa subsp. japonica (Rice)).